A 335-amino-acid polypeptide reads, in one-letter code: tRNA N6-adenosine threonylcarbamoyltransferase (335 aa).

Fe cation contacts are provided by histidine 111 and histidine 115. Residues 134-138 (LISGG), aspartate 167, glycine 180, and asparagine 270 each bind substrate. Aspartate 298 is a binding site for Fe cation.

It belongs to the KAE1 / TsaD family. Requires Fe(2+) as cofactor.

It is found in the cytoplasm. The enzyme catalyses L-threonylcarbamoyladenylate + adenosine(37) in tRNA = N(6)-L-threonylcarbamoyladenosine(37) in tRNA + AMP + H(+). In terms of biological role, required for the formation of a threonylcarbamoyl group on adenosine at position 37 (t(6)A37) in tRNAs that read codons beginning with adenine. Is involved in the transfer of the threonylcarbamoyl moiety of threonylcarbamoyl-AMP (TC-AMP) to the N6 group of A37, together with TsaE and TsaB. TsaD likely plays a direct catalytic role in this reaction. This is tRNA N6-adenosine threonylcarbamoyltransferase from Nitrosococcus oceani (strain ATCC 19707 / BCRC 17464 / JCM 30415 / NCIMB 11848 / C-107).